We begin with the raw amino-acid sequence, 300 residues long: Glycine betaine/carnitine transport binding protein GbuC (300 aa).

A signal peptide spans 1–20 (MLKKLITTAVLAMLIFTLAA). Cys21 carries N-palmitoyl cysteine lipidation. Cys21 carries S-diacylglycerol cysteine lipidation.

As to quaternary structure, the complex is composed of two ATP-binding proteins (GbuA), two transmembrane proteins (GbuB) and a solute-binding protein (GbuC).

It is found in the cell membrane. The complex is activated by an osmotic gradient or by low temperature. In terms of biological role, part of the ABC transporter complex GbuABC involved in glycine betaine uptake. Involved, with BetL and OpuC, in osmoprotection and cryoprotection of Listeria. Can also uptake carnitine when carnitine is abundant in the growth medium. In Listeria monocytogenes serotype 1/2a (strain 10403S), this protein is Glycine betaine/carnitine transport binding protein GbuC (gbuC).